The following is a 417-amino-acid chain: Serine hydroxymethyltransferase (417 aa).

(6S)-5,6,7,8-tetrahydrofolate contacts are provided by residues Leu119 and 123–125 (GHL). Residue Lys227 is modified to N6-(pyridoxal phosphate)lysine.

The protein belongs to the SHMT family. Homodimer. Pyridoxal 5'-phosphate serves as cofactor.

It localises to the cytoplasm. The enzyme catalyses (6R)-5,10-methylene-5,6,7,8-tetrahydrofolate + glycine + H2O = (6S)-5,6,7,8-tetrahydrofolate + L-serine. It functions in the pathway one-carbon metabolism; tetrahydrofolate interconversion. Its pathway is amino-acid biosynthesis; glycine biosynthesis; glycine from L-serine: step 1/1. Its function is as follows. Catalyzes the reversible interconversion of serine and glycine with tetrahydrofolate (THF) serving as the one-carbon carrier. This reaction serves as the major source of one-carbon groups required for the biosynthesis of purines, thymidylate, methionine, and other important biomolecules. Also exhibits THF-independent aldolase activity toward beta-hydroxyamino acids, producing glycine and aldehydes, via a retro-aldol mechanism. In Buchnera aphidicola subsp. Cinara cedri (strain Cc), this protein is Serine hydroxymethyltransferase.